We begin with the raw amino-acid sequence, 220 residues long: Charged multivesicular body protein 2a (220 aa).

Residues 12-53 are a coiled coil; that stretch reads EEMLRQNQRALNRAMRDLDRERQRLEQQEKKIIADIKKMAKQ. Residues 184–220 form a disordered region; it reads ATGGSLSVAAGKKAEPQPTLADADADLEERLNNLRRD. Residues 208–218 carry the MIT-interacting motif motif; sequence ADLEERLNNLR. The segment covering 211 to 220 has biased composition (basic and acidic residues); sequence EERLNNLRRD.

This sequence belongs to the SNF7 family. Probable core component of the endosomal sorting required for transport complex III (ESCRT-III). ESCRT-III components are thought to multimerize to form a flat lattice on the perimeter membrane of the endosome.

The protein localises to the late endosome membrane. It localises to the cytoplasm. In terms of biological role, probable core component of the endosomal sorting required for transport complex III (ESCRT-III) which is involved in multivesicular bodies (MVBs) formation and sorting of endosomal cargo proteins into MVBs. MVBs contain intraluminal vesicles (ILVs) that are generated by invagination and scission from the limiting membrane of the endosome and mostly are delivered to lysosomes enabling degradation of membrane proteins, such as stimulated growth factor receptors, lysosomal enzymes and lipids. The polypeptide is Charged multivesicular body protein 2a (chmp2a) (Danio rerio (Zebrafish)).